The following is a 319-amino-acid chain: Pantothenate kinase (319 aa).

101 to 108 (GSVAVGKS) is an ATP binding site.

The protein belongs to the prokaryotic pantothenate kinase family.

The protein resides in the cytoplasm. It catalyses the reaction (R)-pantothenate + ATP = (R)-4'-phosphopantothenate + ADP + H(+). It functions in the pathway cofactor biosynthesis; coenzyme A biosynthesis; CoA from (R)-pantothenate: step 1/5. The polypeptide is Pantothenate kinase (Clavibacter sepedonicus (Clavibacter michiganensis subsp. sepedonicus)).